We begin with the raw amino-acid sequence, 187 residues long: HTH-type dhaKLM operon transcriptional activator DhaS (187 aa).

The 61-residue stretch at 12–72 folds into the HTH tetR-type domain; it reads IITQKIIAKA…WIFENDFAEL (61 aa). Positions 35–54 form a DNA-binding region, H-T-H motif; sequence SVSDIMQTAKIRRQTFYNYF.

Homodimer. Interacts with a homodimer of DhaQ.

In terms of biological role, in complex with DhaQ, upon activation by dihydroxyacetone, activates transcription of the dhaKLM operon. Binds the inverted repeat sequence 5'-GGACACATN(6)ATTTGTCC-3' located upstream of and partially overlapping with the -35 promoter sequence of the dhaKLM operon promoter. The polypeptide is HTH-type dhaKLM operon transcriptional activator DhaS (dhaS) (Lactococcus lactis subsp. lactis (strain IL1403) (Streptococcus lactis)).